Here is a 429-residue protein sequence, read N- to C-terminus: Trigger factor (429 aa).

The PPIase FKBP-type domain occupies G164–P249.

The protein belongs to the FKBP-type PPIase family. Tig subfamily.

It is found in the cytoplasm. The enzyme catalyses [protein]-peptidylproline (omega=180) = [protein]-peptidylproline (omega=0). In terms of biological role, involved in protein export. Acts as a chaperone by maintaining the newly synthesized protein in an open conformation. Functions as a peptidyl-prolyl cis-trans isomerase. The polypeptide is Trigger factor (Anaeromyxobacter dehalogenans (strain 2CP-C)).